We begin with the raw amino-acid sequence, 562 residues long: MFS-type efflux pump elcC (562 aa).

11 helical membrane passes run 50–70, 80–100, 111–131, 139–159, 184–204, 215–235, 257–277, 288–308, 309–329, 351–371, and 383–403; these read WVFLIALALFEIGSLICGAAP, VVAGIGSGGLFAGAILLVAEF, GMLGAMYSVASVAGPLMGGAF, LCFYINLPLGVVTAVIVFLLV, LYGLVVLVPTIICILLATQWG, IIALFVVGFVLFVAFVVIEIW, IFSFCLFGSFLVVAYFLPLWF, SGIHNLPSILGTTIFSVAAGG, MVFGLGYYTWACILGSVLAAV, VLYGAGCGFGLNQPLIAIQAA, and VVIFMQTFGGTIAIAVAQNVF. An N-linked (GlcNAc...) asparagine glycan is attached at Asn448. A helical transmembrane segment spans residues 455-475; it reads FYVAVATAGLSMAGSILIPWL. The segment at 515–562 is disordered; sequence EIASEDSQSSDIEKVPRNNEVSTYDSQTSEVEKSSVGSTNRKVESIRN. Residues 533 to 554 are compositionally biased toward polar residues; sequence NEVSTYDSQTSEVEKSSVGSTN.

Belongs to the major facilitator superfamily. TCR/Tet family.

It localises to the cell membrane. Its function is as follows. MFS-type efflux pump; part of the gene cluster that mediates the biosynthesis of elsinochrome C, a perelyenequinone phytotoxin structurally similar to cercosporin. This is MFS-type efflux pump elcC from Phaeosphaeria nodorum (strain SN15 / ATCC MYA-4574 / FGSC 10173) (Glume blotch fungus).